The following is a 427-amino-acid chain: MLDVKLLRNNFEEVKQKLQNRGEDLGEFEKFGELDKRRRTLIVETEALKSQRNEVSQEIAKLKREKQDADAKIEEMRVVGDRIKTLDIELREIDEKLDMILMSIPNIPHESTPVGESEDDNVEIRKWGEVRTFDFEPKAHWDLGTDLDILDFENAAKVTGSRFVFYKKLGARLERALINFMMDLHSNEHGYEEMLPPYMVNRASMTGTGQLPKFEEDAFLIEAEDYFLIPTAEVPVTNYHREDILKAEDLPRKYTAFSACFRSEAGSAGRDTRGLIRQHQFNKVELVQFVKPEDSYEALEKLTSNAEEVLRRLELPYRVLSMCTADLGFTAAKKYDLEVWIPSYDSYREISSCSNFESFQARRANIRFRREPGSKPEYVHTLNGSGLALGRTVAAILENYQDADGSVRIPKVLQGYMGGIEKIELPK.

231–233 (TAE) is a binding site for L-serine. 262–264 (RSE) contacts ATP. Position 285 (Glu285) interacts with L-serine. Residue 349-352 (EISS) coordinates ATP. Ser385 contributes to the L-serine binding site.

Belongs to the class-II aminoacyl-tRNA synthetase family. Type-1 seryl-tRNA synthetase subfamily. Homodimer. The tRNA molecule binds across the dimer.

Its subcellular location is the cytoplasm. The enzyme catalyses tRNA(Ser) + L-serine + ATP = L-seryl-tRNA(Ser) + AMP + diphosphate + H(+). It catalyses the reaction tRNA(Sec) + L-serine + ATP = L-seryl-tRNA(Sec) + AMP + diphosphate + H(+). It functions in the pathway aminoacyl-tRNA biosynthesis; selenocysteinyl-tRNA(Sec) biosynthesis; L-seryl-tRNA(Sec) from L-serine and tRNA(Sec): step 1/1. Catalyzes the attachment of serine to tRNA(Ser). Is also able to aminoacylate tRNA(Sec) with serine, to form the misacylated tRNA L-seryl-tRNA(Sec), which will be further converted into selenocysteinyl-tRNA(Sec). The chain is Serine--tRNA ligase from Listeria welshimeri serovar 6b (strain ATCC 35897 / DSM 20650 / CCUG 15529 / CIP 8149 / NCTC 11857 / SLCC 5334 / V8).